A 73-amino-acid chain; its full sequence is Arabinogalactan protein 16 (73 aa).

The signal sequence occupies residues Met1–Ala26. Pyrrolidone carboxylic acid is present on Gln27. 4-hydroxyproline is present on residues Pro31, Pro33, and Pro35. O-linked (Ara...) hydroxyproline glycans are attached at residues Pro31, Pro33, and Pro35. Residue Ser37 is the site of GPI-anchor amidated serine attachment. Residues Asp38 to Phe73 constitute a propeptide, removed in mature form.

This sequence belongs to the AG-peptide AGP family. Contains 4-hydroxyproline; hydroxylated on Pro-31, Pro-33 and Pro-35. Post-translationally, O-glycosylated on hydroxyprolines; noncontiguous hydroxylproline residues are glycosylated with arabinogalactan. In terms of tissue distribution, predominantly expressed in flowers.

The protein resides in the cell membrane. Functionally, proteoglycan that seems to be implicated in diverse developmental roles such as differentiation, cell-cell recognition, embryogenesis and programmed cell death. The sequence is that of Arabinogalactan protein 16 from Arabidopsis thaliana (Mouse-ear cress).